A 486-amino-acid chain; its full sequence is Replication factor C large subunit (486 aa).

An ATP-binding site is contributed by G46–T53. Residues V419 to F486 are disordered. Composition is skewed to basic and acidic residues over residues K420 to E432 and R442 to A480.

It belongs to the activator 1 small subunits family. RfcL subfamily. As to quaternary structure, heteromultimer composed of small subunits (RfcS) and large subunits (RfcL).

In terms of biological role, part of the RFC clamp loader complex which loads the PCNA sliding clamp onto DNA. The polypeptide is Replication factor C large subunit (Methanococcus maripaludis (strain DSM 14266 / JCM 13030 / NBRC 101832 / S2 / LL)).